The chain runs to 229 residues: Putative N-acetylmannosamine-6-phosphate 2-epimerase (229 aa).

This sequence belongs to the NanE family.

It carries out the reaction an N-acyl-D-glucosamine 6-phosphate = an N-acyl-D-mannosamine 6-phosphate. Its pathway is amino-sugar metabolism; N-acetylneuraminate degradation; D-fructose 6-phosphate from N-acetylneuraminate: step 3/5. In terms of biological role, converts N-acetylmannosamine-6-phosphate (ManNAc-6-P) to N-acetylglucosamine-6-phosphate (GlcNAc-6-P). The sequence is that of Putative N-acetylmannosamine-6-phosphate 2-epimerase from Salmonella agona (strain SL483).